Consider the following 433-residue polypeptide: SPI-2 type 3 secretion system ATPase (433 aa).

An ATP-binding site is contributed by 165–170; that stretch reads GVGKST.

This sequence belongs to the ATPase alpha/beta chains family. T3SS ATPase subfamily. The core secretion machinery of the T3SS is composed of approximately 20 different proteins, including cytoplasmic components, a base, an export apparatus and a needle. This subunit is part of the cytosolic complex. Forms homohexamers. Forms a complex with SsaK/SctL (stator protein) and SsaQ/SctQ (the major sorting platform component). Interacts with the T3SS-2 specific chaperones SsaE, SseA, SscA, SscB, and SrcA.

It is found in the cytoplasm. The enzyme catalyses ATP + H2O + cellular proteinSide 1 = ADP + phosphate + cellular proteinSide 2.. Its function is as follows. ATPase component of the type III secretion system (T3SS), also called injectisome, which is used to inject bacterial effector proteins into eukaryotic host cells. Acts as a molecular motor to provide the energy that is required for the export of proteins. Required for type III secretion apparatus (T3SA) formation, secretion of a subset of SPI-2 effectors and virulence. May play a critical role in T3SS substrate recognition, disassembly of the effector/chaperone complex and unfolding of the effector in an ATP-dependent manner prior to secretion. Releases the effector protein SseB from the T3SS-2 specific chaperone SsaE in an ATP-dependent manner. This Salmonella typhimurium (strain LT2 / SGSC1412 / ATCC 700720) protein is SPI-2 type 3 secretion system ATPase.